Consider the following 89-residue polypeptide: Translation initiation factor IF-1, chloroplastic (89 aa).

An S1-like domain is found at Met-1 to Arg-72.

This sequence belongs to the IF-1 family. In terms of assembly, component of the 30S ribosomal translation pre-initiation complex which assembles on the 30S ribosome in the order IF-2 and IF-3, IF-1 and N-formylmethionyl-tRNA(fMet); mRNA recruitment can occur at any time during PIC assembly.

Its subcellular location is the plastid. The protein resides in the chloroplast. Functionally, one of the essential components for the initiation of protein synthesis. Stabilizes the binding of IF-2 and IF-3 on the 30S subunit to which N-formylmethionyl-tRNA(fMet) subsequently binds. Helps modulate mRNA selection, yielding the 30S pre-initiation complex (PIC). Upon addition of the 50S ribosomal subunit IF-1, IF-2 and IF-3 are released leaving the mature 70S translation initiation complex. The polypeptide is Translation initiation factor IF-1, chloroplastic (Angiopteris evecta (Mule's foot fern)).